Here is a 505-residue protein sequence, read N- to C-terminus: L-carnitine/gamma-butyrobetaine antiporter (505 aa).

The next 12 helical transmembrane spans lie at 10 to 30 (IEPK…WLTV), 51 to 71 (WGWA…WLVF), 92 to 112 (IFMM…SIEI), 143 to 163 (GPLP…FFFV), 195 to 215 (FYLV…TPLV), 231 to 251 (LDAI…ACGL), 263 to 283 (SYLS…SFIM), 316 to 336 (WTVF…IFLA), 347 to 367 (LCFG…TVLG), 403 to 423 (LSTA…VTLI), 446 to 466 (LLVR…LLAL), and 475 to 495 (AIIA…LSFI).

It belongs to the BCCT transporter (TC 2.A.15) family. CaiT subfamily. As to quaternary structure, homotrimer.

The protein resides in the cell inner membrane. It catalyses the reaction 4-(trimethylamino)butanoate(in) + (R)-carnitine(out) = 4-(trimethylamino)butanoate(out) + (R)-carnitine(in). It participates in amine and polyamine metabolism; carnitine metabolism. Catalyzes the exchange of L-carnitine for gamma-butyrobetaine. The protein is L-carnitine/gamma-butyrobetaine antiporter of Salmonella choleraesuis (strain SC-B67).